A 172-amino-acid chain; its full sequence is Crossover junction endodeoxyribonuclease RuvC (172 aa).

Catalysis depends on residues aspartate 7, glutamate 68, and aspartate 141. Residues aspartate 7, glutamate 68, and aspartate 141 each contribute to the Mg(2+) site.

It belongs to the RuvC family. As to quaternary structure, homodimer which binds Holliday junction (HJ) DNA. The HJ becomes 2-fold symmetrical on binding to RuvC with unstacked arms; it has a different conformation from HJ DNA in complex with RuvA. In the full resolvosome a probable DNA-RuvA(4)-RuvB(12)-RuvC(2) complex forms which resolves the HJ. Mg(2+) serves as cofactor.

Its subcellular location is the cytoplasm. The enzyme catalyses Endonucleolytic cleavage at a junction such as a reciprocal single-stranded crossover between two homologous DNA duplexes (Holliday junction).. In terms of biological role, the RuvA-RuvB-RuvC complex processes Holliday junction (HJ) DNA during genetic recombination and DNA repair. Endonuclease that resolves HJ intermediates. Cleaves cruciform DNA by making single-stranded nicks across the HJ at symmetrical positions within the homologous arms, yielding a 5'-phosphate and a 3'-hydroxyl group; requires a central core of homology in the junction. The consensus cleavage sequence is 5'-(A/T)TT(C/G)-3'. Cleavage occurs on the 3'-side of the TT dinucleotide at the point of strand exchange. HJ branch migration catalyzed by RuvA-RuvB allows RuvC to scan DNA until it finds its consensus sequence, where it cleaves and resolves the cruciform DNA. This chain is Crossover junction endodeoxyribonuclease RuvC, found in Frankia casuarinae (strain DSM 45818 / CECT 9043 / HFP020203 / CcI3).